The primary structure comprises 422 residues: Serine--tRNA ligase (422 aa).

231–233 (TAE) serves as a coordination point for L-serine. Position 261–263 (261–263 (RSE)) interacts with ATP. L-serine is bound at residue glutamate 284. ATP is bound at residue 348 to 351 (EISS). Residue serine 383 participates in L-serine binding.

Belongs to the class-II aminoacyl-tRNA synthetase family. Type-1 seryl-tRNA synthetase subfamily. Homodimer. The tRNA molecule binds across the dimer.

The protein resides in the cytoplasm. It catalyses the reaction tRNA(Ser) + L-serine + ATP = L-seryl-tRNA(Ser) + AMP + diphosphate + H(+). The enzyme catalyses tRNA(Sec) + L-serine + ATP = L-seryl-tRNA(Sec) + AMP + diphosphate + H(+). Its pathway is aminoacyl-tRNA biosynthesis; selenocysteinyl-tRNA(Sec) biosynthesis; L-seryl-tRNA(Sec) from L-serine and tRNA(Sec): step 1/1. In terms of biological role, catalyzes the attachment of serine to tRNA(Ser). Is also able to aminoacylate tRNA(Sec) with serine, to form the misacylated tRNA L-seryl-tRNA(Sec), which will be further converted into selenocysteinyl-tRNA(Sec). This is Serine--tRNA ligase from Mycoplasmopsis agalactiae (strain NCTC 10123 / CIP 59.7 / PG2) (Mycoplasma agalactiae).